Reading from the N-terminus, the 510-residue chain is Bifunctional purine biosynthesis protein PurH (510 aa).

The MGS-like domain maps to 1-143 (MTKRALISVS…KNHDAVLVLV (143 aa)).

The protein belongs to the PurH family.

The enzyme catalyses (6R)-10-formyltetrahydrofolate + 5-amino-1-(5-phospho-beta-D-ribosyl)imidazole-4-carboxamide = 5-formamido-1-(5-phospho-D-ribosyl)imidazole-4-carboxamide + (6S)-5,6,7,8-tetrahydrofolate. It catalyses the reaction IMP + H2O = 5-formamido-1-(5-phospho-D-ribosyl)imidazole-4-carboxamide. The protein operates within purine metabolism; IMP biosynthesis via de novo pathway; 5-formamido-1-(5-phospho-D-ribosyl)imidazole-4-carboxamide from 5-amino-1-(5-phospho-D-ribosyl)imidazole-4-carboxamide (10-formyl THF route): step 1/1. It participates in purine metabolism; IMP biosynthesis via de novo pathway; IMP from 5-formamido-1-(5-phospho-D-ribosyl)imidazole-4-carboxamide: step 1/1. This is Bifunctional purine biosynthesis protein PurH from Deinococcus radiodurans (strain ATCC 13939 / DSM 20539 / JCM 16871 / CCUG 27074 / LMG 4051 / NBRC 15346 / NCIMB 9279 / VKM B-1422 / R1).